The primary structure comprises 3323 residues: Mucin-3A (3323 aa).

Residues M1 to A15 form the signal peptide. 15 disordered regions span residues T218 to T243, T270 to T289, I325 to T345, G359 to A380, M539 to E677, N700 to S722, E734 to K756, S909 to P991, I1170 to T1201, A1318 to S1356, A1380 to V1442, T1484 to K1509, T1714 to S1746, F1793 to S1844, and T1900 to T2056. The segment covering T270 to T284 has biased composition (low complexity). Positions G545–H563 are enriched in polar residues. Positions T564–T618 are enriched in low complexity. Over residues D619–M629 the composition is skewed to polar residues. Over residues T630–T676 the composition is skewed to low complexity. Residues N700–N721 show a composition bias toward polar residues. Residues S909–S918 show a composition bias toward low complexity. Over residues A919–G932 the composition is skewed to polar residues. Over residues T933–P991 the composition is skewed to low complexity. A compositionally biased stretch (low complexity) spans P1324–S1356. 32 consecutive repeat copies span residues V1893 to S1910, I1911 to S1927, I1928 to S1944, I1945 to S1961, I1962 to S1978, I1979 to L1995, I1996 to S2012, I2013 to S2029, I2030 to S2046, I2047 to L2062, I2063 to S2079, I2080 to S2096, I2097 to S2113, I2114 to S2130, I2131 to S2147, I2148 to L2164, I2165 to S2191, N2192 to S2208, I2209 to S2225, I2226 to S2242, I2243 to S2259, I2260 to S2276, I2277 to L2293, I2294 to S2310, I2311 to S2327, I2328 to S2344, I2345 to S2361, I2362 to S2378, I2379 to W2395, V2396 to S2412, I2413 to S2429, and I2430 to S2446. The segment at V1893 to S2446 is 32 X approximate tandem repeats, Ser/Thr-rich. Residues F1907 to N1947 show a composition bias toward polar residues. Over residues T1948 to T2056 the composition is skewed to low complexity. Low complexity-rich tracts occupy residues T2100–T2170, T2177–T2384, T2393–T2447, and T2464–T2507. Disordered regions lie at residues T2100–T2447, T2464–D2508, T2578–T2608, I2631–S2656, M2834–N2858, and S2897–R2937. Polar residues predominate over residues T2578–G2602. 3 stretches are compositionally biased toward low complexity: residues S2633–S2656, M2834–S2849, and T2905–R2937. One can recognise an EGF-like domain in the interval S2976 to E3009. 2 cysteine pairs are disulfide-bonded: C2980/C2986 and C2999/C3008. The 126-residue stretch at D3018–K3143 folds into the SEA domain. A helical membrane pass occupies residues L3227–V3247.

Highly O-glycosylated and probably also N-glycosylated. In terms of tissue distribution, broad specificity; small intestine, colon, colonic tumors, heart, liver, thymus, prostate, pancreas and gall bladder.

It localises to the membrane. Its subcellular location is the secreted. Its function is as follows. Major glycoprotein component of a variety of mucus gels. Thought to provide a protective, lubricating barrier against particles and infectious agents at mucosal surfaces. May be involved in ligand binding and intracellular signaling. The sequence is that of Mucin-3A from Homo sapiens (Human).